The sequence spans 289 residues: 4-hydroxy-3-methylbut-2-enyl diphosphate reductase (289 aa).

Cys-12 provides a ligand contact to [4Fe-4S] cluster. (2E)-4-hydroxy-3-methylbut-2-enyl diphosphate is bound by residues His-44 and His-81. Residues His-44 and His-81 each contribute to the dimethylallyl diphosphate site. Residues His-44 and His-81 each contribute to the isopentenyl diphosphate site. [4Fe-4S] cluster is bound at residue Cys-103. Residue His-130 coordinates (2E)-4-hydroxy-3-methylbut-2-enyl diphosphate. Residue His-130 coordinates dimethylallyl diphosphate. Isopentenyl diphosphate is bound at residue His-130. Residue Glu-132 is the Proton donor of the active site. Thr-174 contacts (2E)-4-hydroxy-3-methylbut-2-enyl diphosphate. Cys-202 contacts [4Fe-4S] cluster. (2E)-4-hydroxy-3-methylbut-2-enyl diphosphate contacts are provided by Ser-230, Asn-232, and Ser-273. The dimethylallyl diphosphate site is built by Ser-230, Asn-232, and Ser-273. Residues Ser-230, Asn-232, and Ser-273 each contribute to the isopentenyl diphosphate site.

This sequence belongs to the IspH family. [4Fe-4S] cluster is required as a cofactor.

It catalyses the reaction isopentenyl diphosphate + 2 oxidized [2Fe-2S]-[ferredoxin] + H2O = (2E)-4-hydroxy-3-methylbut-2-enyl diphosphate + 2 reduced [2Fe-2S]-[ferredoxin] + 2 H(+). The enzyme catalyses dimethylallyl diphosphate + 2 oxidized [2Fe-2S]-[ferredoxin] + H2O = (2E)-4-hydroxy-3-methylbut-2-enyl diphosphate + 2 reduced [2Fe-2S]-[ferredoxin] + 2 H(+). The protein operates within isoprenoid biosynthesis; dimethylallyl diphosphate biosynthesis; dimethylallyl diphosphate from (2E)-4-hydroxy-3-methylbutenyl diphosphate: step 1/1. It participates in isoprenoid biosynthesis; isopentenyl diphosphate biosynthesis via DXP pathway; isopentenyl diphosphate from 1-deoxy-D-xylulose 5-phosphate: step 6/6. Functionally, catalyzes the conversion of 1-hydroxy-2-methyl-2-(E)-butenyl 4-diphosphate (HMBPP) into a mixture of isopentenyl diphosphate (IPP) and dimethylallyl diphosphate (DMAPP). Acts in the terminal step of the DOXP/MEP pathway for isoprenoid precursor biosynthesis. This Treponema denticola (strain ATCC 35405 / DSM 14222 / CIP 103919 / JCM 8153 / KCTC 15104) protein is 4-hydroxy-3-methylbut-2-enyl diphosphate reductase.